The primary structure comprises 98 residues: Putative zinc finger protein ORF98b (98 aa).

A C2H2-type zinc finger spans residues 54–77 (GFCPYCHNHYRTFGILANHIMRSH).

The polypeptide is Putative zinc finger protein ORF98b (Acidianus convivator (ATV)).